A 491-amino-acid chain; its full sequence is Transmembrane protein 200A (491 aa).

Topologically, residues M1–S61 are cytoplasmic. Residues R16–R41 are disordered. Polar residues predominate over residues A20–T34. The helical transmembrane segment at G62–G82 threads the bilayer. Topologically, residues Y83 to K126 are extracellular. N100 carries N-linked (GlcNAc...) asparagine glycosylation. Residues M127–L147 form a helical membrane-spanning segment. Residues H148–F491 lie on the Cytoplasmic side of the membrane. S350 carries the phosphoserine modification.

It belongs to the TMEM200 family. In terms of tissue distribution, expressed in cerebellum.

It is found in the membrane. The protein is Transmembrane protein 200A (TMEM200A) of Homo sapiens (Human).